The sequence spans 147 residues: Sulfur acceptor protein CsdE (147 aa).

The active-site Cysteine persulfide intermediate is Cys61. Cys61 bears the Cysteine persulfide mark.

The protein belongs to the SufE family. As to quaternary structure, homodimer. Forms a heterodimer with CsdA. Interacts with CsdA and with TcdA/CsdL.

In terms of biological role, stimulates the cysteine desulfurase activity of CsdA. Contains a cysteine residue (Cys-61) that acts to accept sulfur liberated via the desulfurase activity of CsdA. May be able to transfer sulfur to TcdA/CsdL. Seems to support the function of TcdA in the generation of cyclic threonylcarbamoyladenosine at position 37 (ct(6)A37) in tRNAs that read codons beginning with adenine. Does not appear to participate in Fe/S biogenesis. The polypeptide is Sulfur acceptor protein CsdE (csdE) (Escherichia coli (strain K12)).